Reading from the N-terminus, the 533-residue chain is Retinoid isomerohydrolase (533 aa).

Ser-2 carries the post-translational modification N-acetylserine. The S-palmitoyl cysteine; in membrane form moiety is linked to residue Cys-112. Residue His-180 coordinates Fe cation. Cys-231 carries S-palmitoyl cysteine; in membrane form lipidation. Fe cation-binding residues include His-241 and His-313. 2 S-palmitoyl cysteine; in membrane form lipidation sites follow: Cys-329 and Cys-330. His-527 serves as a coordination point for Fe cation.

Belongs to the carotenoid oxygenase family. Fe(2+) serves as cofactor. In terms of processing, palmitoylation by LRAT regulates ligand binding specificity; the palmitoylated form (membrane form) specifically binds all-trans-retinyl-palmitate, while the soluble unpalmitoylated form binds all-trans-retinol (vitamin A). Retinal pigment epithelium specific.

It localises to the cell membrane. The enzyme catalyses an all-trans-retinyl ester + H2O = 11-cis-retinol + a fatty acid + H(+). The catalysed reaction is lutein = (3R,3'S)-zeaxanthin. It carries out the reaction all-trans-retinyl hexadecanoate + H2O = 11-cis-retinol + hexadecanoate + H(+). Critical isomerohydrolase in the retinoid cycle involved in regeneration of 11-cis-retinal, the chromophore of rod and cone opsins. Catalyzes the cleavage and isomerization of all-trans-retinyl fatty acid esters to 11-cis-retinol which is further oxidized by 11-cis retinol dehydrogenase to 11-cis-retinal for use as visual chromophore. Essential for the production of 11-cis retinal for both rod and cone photoreceptors. Also capable of catalyzing the isomerization of lutein to meso-zeaxanthin an eye-specific carotenoid. The soluble form binds vitamin A (all-trans-retinol), making it available for LRAT processing to all-trans-retinyl ester. The membrane form, palmitoylated by LRAT, binds all-trans-retinyl esters, making them available for IMH (isomerohydrolase) processing to all-cis-retinol. The soluble form is regenerated by transferring its palmitoyl groups onto 11-cis-retinol, a reaction catalyzed by LRAT. The protein is Retinoid isomerohydrolase (RPE65) of Cynops pyrrhogaster (Japanese fire-bellied newt).